The following is a 344-amino-acid chain: Serpentine receptor class H-72 (344 aa).

The next 7 membrane-spanning stretches (helical) occupy residues 30–50 (GLAF…FFTG), 66–86 (LSLV…SFFI), 110–132 (TVVQ…TLLF), 155–175 (WLAG…FNLA), 221–241 (SIYM…LVIV), 259–279 (YGLI…SVLI), and 292–312 (LVSI…LLVH).

It belongs to the nematode receptor-like protein srh family.

It is found in the membrane. This chain is Serpentine receptor class H-72 (srh-72), found in Caenorhabditis elegans.